A 1295-amino-acid chain; its full sequence is Protein glp-1 (1295 aa).

An N-terminal signal peptide occupies residues 1 to 15; it reads MRVLLILLAFFAPIA. The Extracellular segment spans residues 16-764; the sequence is SQLMGGECGR…NEIDEGWSRS (749 aa). EGF-like domains are found at residues 19 to 58, 117 to 152, 154 to 190, and 190 to 230; these read MGGE…AFCE, GVNP…SYCE, GIDH…RYCE, and ERTE…EFCN. Disulfide bonds link Cys-23–Cys-35, Cys-29–Cys-46, Cys-48–Cys-57, Cys-121–Cys-131, Cys-126–Cys-140, Cys-142–Cys-151, Cys-158–Cys-169, Cys-163–Cys-178, Cys-180–Cys-189, Cys-201–Cys-206, Cys-220–Cys-229, Cys-236–Cys-248, Cys-242–Cys-257, Cys-259–Cys-268, Cys-275–Cys-286, Cys-280–Cys-296, Cys-298–Cys-307, Cys-329–Cys-342, Cys-336–Cys-347, Cys-349–Cys-358, Cys-373–Cys-384, Cys-378–Cys-394, Cys-396–Cys-405, Cys-411–Cys-422, Cys-416–Cys-431, Cys-433–Cys-442, Cys-450–Cys-461, Cys-455–Cys-467, Cys-469–Cys-478, Cys-496–Cys-519, Cys-501–Cys-514, Cys-510–Cys-526, Cys-536–Cys-560, Cys-542–Cys-555, Cys-551–Cys-567, Cys-582–Cys-595, and Cys-591–Cys-607. One can recognise an EGF-like 5; calcium-binding domain in the interval 232-269; the sequence is DKNECLIEETCVNNSTCFNLHGDFTCTCKPGYAGKYCE. N-linked (GlcNAc...) asparagine glycosylation is found at Asn-244 and Asn-245. EGF-like domains are found at residues 271-308, 316-359, 369-406, 407-443, and 446-479; these read AIDM…QRCE, GGIH…DRCE, DIQS…LNCE, QHLL…DYCE, and DRQL…PTCE. Asn-333 carries an N-linked (GlcNAc...) asparagine glycan. An N-linked (GlcNAc...) asparagine glycan is attached at Asn-381. 3 LNR repeats span residues 496–532, 536–577, and 581–612; these read CEQR…GQRP, CQYP…CPAH, and HCIE…NGTE. N-linked (GlcNAc...) asparagine glycosylation is found at Asn-609 and Asn-675. Residues 765 to 786 form a helical membrane-spanning segment; the sequence is QVILFACIAFLAFGTVVAGVIA. Residues 787-1295 are Cytoplasmic-facing; sequence KNGPERSRKR…AEQMNGSFYC (509 aa). 5 ANK repeats span residues 961-990, 994-1023, 1030-1062, 1074-1103, and 1107-1136; these read DENT…NPTI, SERS…LLKE, NGMT…KLDY, KGRT…NKDK, and DGRT…SLGI. Residues 1177–1244 form a disordered region; it reads IVKSGHGAKS…TTSTPNRMET (68 aa). Residues 1201-1210 are compositionally biased toward polar residues; that stretch reads KTPTSAASSR. Positions 1221–1239 are enriched in low complexity; sequence DGSFSSPSPHYYPTTTSTP.

In terms of assembly, interacts with sel-10. As to quaternary structure, when activated, the glp-1/Notch intracellular domain (NICD) may become a component of a complex consisting of at least the NICD, lag-1 and lag-3. Upon binding its ligands, it is cleaved (S2 cleavage) in its extracellular domain, close to the transmembrane domain. S2 cleavage is probably mediated by the metalloproteases adm-4 and sup-17. It is then cleaved (S3 cleavage) downstream of its transmembrane domain, releasing it from the cell membrane; S3 cleavage requires a multiprotein gamma-secretase complex, which may include presenilin sel-12. As to expression, expressed in the distal mitotic region of the germ line. May be absent from the gonadal distal tip cell (DTC).

The protein resides in the cell membrane. It localises to the cell projection. It is found in the axon. Its subcellular location is the nucleus. Functionally, essential signaling protein which has a major role in germline and embryonic development; involved in cell fate decisions that require cell-cell interactions. Probable membrane-bound receptor for putative ligands lag-2 and apx-1. Upon ligand activation, and releasing from the cell membrane, the glp-1/Notch intracellular domain (NICD) probably forms a transcriptional activator complex with lag-1 and lag-3 and regulates expression of various genes; targets in the germline include lst-1 and sygl-1. Involved in the specification of the cell fates of the blastomeres, ABa and ABp. Proper signaling by glp-1 induces ABa descendants to produce anterior pharyngeal cells, and ABp descendants to adopt a different fate. Contributes to the establishment of the dorsal-ventral axis in early embryos. Required in postmitotic neurons in order to maintain the developmentally arrested larval state known as dauer, probably in response to lag-2. Regulates germ cell mitotic proliferation probably by regulating MAP kinase phosphatase lip-1 expression. Required for oocyte growth control. Plays a negative role in lifespan. The chain is Protein glp-1 from Caenorhabditis elegans.